The primary structure comprises 328 residues: GMP reductase (328 aa).

Cysteine 176 functions as the Thioimidate intermediate in the catalytic mechanism. Residue 205 to 228 (IIADGGIRTHGDIAKSIRFGASMI) participates in NADP(+) binding.

It belongs to the IMPDH/GMPR family. GuaC type 2 subfamily.

It catalyses the reaction IMP + NH4(+) + NADP(+) = GMP + NADPH + 2 H(+). Functionally, catalyzes the irreversible NADPH-dependent deamination of GMP to IMP. It functions in the conversion of nucleobase, nucleoside and nucleotide derivatives of G to A nucleotides, and in maintaining the intracellular balance of A and G nucleotides. This chain is GMP reductase, found in Streptococcus pneumoniae (strain ATCC 700669 / Spain 23F-1).